The primary structure comprises 275 residues: T cell receptor alpha chain MC.7.G5 (275 aa).

Residues 1–21 form the signal peptide; sequence MACPGFLWALVISTCLEFSMA. The 95-residue stretch at 22–116 folds into the Ig-like V-type domain; sequence QTVTQSQPEM…AAMYFCAYRS (95 aa). The segment at 22 to 116 is t cell receptor alpha variable 38-2DV8; it reads QTVTQSQPEM…AAMYFCAYRS (95 aa). A disulfide bond links Cys-43 and Cys-112. The CDR1 stretch occupies residues 47 to 53; sequence TSESDYY. Residues 71 to 81 are CDR2; sequence QEAYKQQNATE. Asn-78 is a glycosylation site (N-linked (GlcNAc...) asparagine). Positions 112–124 are CDR3; it reads CAYRSAVNARLMF. A t cell receptor alpha joining 31 region spans residues 119-134; that stretch reads NARLMFGDGTQLVVKP. Residues 136–275 form a t cell receptor alpha constant region; that stretch reads IQNPDPAVYQ…LLMTLRLWSS (140 aa). The Ig-like C1-type domain maps to 154–242; it reads KSVCLFTDFD…LVEKSFETDT (89 aa). The cysteines at positions 157 and 207 are disulfide-linked. 4 N-linked (GlcNAc...) asparagine glycosylation sites follow: Asn-167, Asn-201, Asn-212, and Asn-248. Positions 229–250 are connecting peptide; it reads CDVKLVEKSFETDTNLNFQNLS. A helical transmembrane segment spans residues 251–273; the sequence is VIGFRILLLKVAGFNLLMTLRLW. Residues 274-275 are Cytoplasmic-facing; that stretch reads SS.

Disulfide-linked heterodimer with TRBV25-1*01J2S3*01C2*01 beta chain. The alpha-beta TR associates with the transmembrane signaling CD3 coreceptor proteins to form the TR-CD3 (TCR). The assembly of alpha-beta TR heterodimers with CD3 occurs in the endoplasmic reticulum where a single alpha-beta TR heterodimer associates with one CD3D-CD3E heterodimer, one CD3G-CD3E heterodimer and one CD247 homodimer forming a stable octameric structure. CD3D-CD3E and CD3G-CD3E heterodimers preferentially associate with TR alpha and TR beta chains (via TM domain), respectively. The association of the CD247 homodimer is the last step of TCR assembly in the endoplasmic reticulum and is required for transport to the cell surface. As to expression, expressed in MR1-restricted CD8-positive T cells.

The protein localises to the cell membrane. Its function is as follows. The alpha chain of TRAV38-2DV8*01J31*01C*01/TRBV25-1*01J2S3*01C2*01 alpha-beta T cell receptor (TR) clonotype that displays pan-cancer cell recognition via the invariant MR1 molecule. On CD8-positive T cell clone MC.7.G5, likely recognizes tumor-specific or -associated metabolite(s) essential for cancer cell survival, triggering killing of many cancer cell types including lung, melanoma, leukemia, colon, breast, prostate, bone and ovarian cancer cells. Mediates cancer cell cytotoxicity in an HLA-independent manner. Has no reactivity to healthy cells, even stressed or infected by bacteria. Antigen recognition initiates TR-CD3 clustering on the cell surface and intracellular activation of LCK that phosphorylates the ITAM motifs of CD3G, CD3D, CD3E and CD247 enabling the recruitment of ZAP70. In turn, ZAP70 phosphorylates LAT, which recruits numerous signaling molecules to form the LAT signalosome. The LAT signalosome propagates signal branching to three major signaling pathways, the calcium, the mitogen-activated protein kinase (MAPK) kinase and the nuclear factor NF-kappa-B (NF-kB) pathways, leading to the mobilization of transcription factors that are critical for gene expression and essential for T cell differentiation into effector/memory T cells. This is T cell receptor alpha chain MC.7.G5 from Homo sapiens (Human).